The primary structure comprises 189 residues: FAS1 domain-containing protein mug57 (189 aa).

An N-terminal signal peptide occupies residues 1–24 (MMKLFCLNIFRFLYTTSFISAVLS). The FAS1 domain occupies 37–182 (EPRLFELLAE…GEMWVLNATL (146 aa)).

Its subcellular location is the cytoplasm. It localises to the nucleus. It is found in the membrane. In terms of biological role, has a role in sporulation. This is FAS1 domain-containing protein mug57 (mug57) from Schizosaccharomyces pombe (strain 972 / ATCC 24843) (Fission yeast).